Consider the following 290-residue polypeptide: Dual-specificity RNA pseudouridine synthase RluF (290 aa).

The S4 RNA-binding domain occupies Val7–Leu72. Interaction with RNA regions lie at residues Arg105–Lys108 and Arg187–Arg190. Residue Asp107 is the Nucleophile of the active site. The disordered stretch occupies residues Val243–Arg290. Residues Val261–Gly271 show a composition bias toward basic and acidic residues.

It belongs to the pseudouridine synthase RsuA family. As to quaternary structure, monomer.

The enzyme catalyses uridine(2604) in 23S rRNA = pseudouridine(2604) in 23S rRNA. It catalyses the reaction uridine(35) in tRNA(Tyr) = pseudouridine(35) in tRNA(Tyr). Dual specificity enzyme that catalyzes the synthesis of pseudouridine from uracil-2604 in 23S ribosomal RNA and from uracil-35 in the anticodon of tRNA(Tyr). Can, to a small extent, also react with uracil-2605. In Escherichia coli (strain K12), this protein is Dual-specificity RNA pseudouridine synthase RluF (rluF).